The sequence spans 562 residues: Endoglucanase E1 (562 aa).

Positions 1-41 (MPRALRRVPGSRVMLRVGVVVAVLALVAALANLAVPRPARA) are cleaved as a signal peptide. The segment at 42–400 (AGGGYWHTSG…IKSSIFDPVG (359 aa)) is catalytic. Cysteine 75 and cysteine 161 are oxidised to a cystine. Glutamate 203 functions as the Proton donor in the catalytic mechanism. A disulfide bridge links cysteine 209 with cysteine 212. Glutamate 323 acts as the Nucleophile in catalysis. The interval 399-462 (VGASASPSSQ…PTPSPTAASG (64 aa)) is disordered. Low complexity-rich tracts occupy residues 401 to 411 (ASASPSSQPSP) and 437 to 449 (PTPTLTPTATPTP). Positions 458 to 562 (TAASGARCTA…AAPTVACAAS (105 aa)) constitute a CBM2 domain.

It belongs to the glycosyl hydrolase 5 (cellulase A) family.

It catalyses the reaction Endohydrolysis of (1-&gt;4)-beta-D-glucosidic linkages in cellulose, lichenin and cereal beta-D-glucans.. Its function is as follows. Has a very high specific activity on carboxymethylcellulose. The chain is Endoglucanase E1 from Acidothermus cellulolyticus (strain ATCC 43068 / DSM 8971 / 11B).